An 855-amino-acid chain; its full sequence is Valine--tRNA ligase (855 aa).

The 'HIGH' region motif lies at 42–52 (PTISGKLHIGH). The 'KMSKS' region signature appears at 574 to 578 (KMSKS). Lys577 serves as a coordination point for ATP.

It belongs to the class-I aminoacyl-tRNA synthetase family. ValS type 2 subfamily. As to quaternary structure, monomer.

It localises to the cytoplasm. It carries out the reaction tRNA(Val) + L-valine + ATP = L-valyl-tRNA(Val) + AMP + diphosphate. In terms of biological role, catalyzes the attachment of valine to tRNA(Val). As ValRS can inadvertently accommodate and process structurally similar amino acids such as threonine, to avoid such errors, it has a 'posttransfer' editing activity that hydrolyzes mischarged Thr-tRNA(Val) in a tRNA-dependent manner. This Wolbachia sp. subsp. Brugia malayi (strain TRS) protein is Valine--tRNA ligase.